A 246-amino-acid polypeptide reads, in one-letter code: Small ribosomal subunit protein uS2 (246 aa).

Belongs to the universal ribosomal protein uS2 family.

The protein is Small ribosomal subunit protein uS2 of Chromohalobacter salexigens (strain ATCC BAA-138 / DSM 3043 / CIP 106854 / NCIMB 13768 / 1H11).